We begin with the raw amino-acid sequence, 1095 residues long: Inactive phospholipase C-like protein 1 (1095 aa).

Over residues 1-11 (MAEGAAGREDP) the composition is skewed to basic and acidic residues. Residues 1-61 (MAEGAAGRED…PGAAGTPADS (61 aa)) are disordered. Serine 47 and serine 77 each carry phosphoserine. The interaction with PPP1C stretch occupies residues 83-222 (SNQKCGGRKK…IWVSGLRYLV (140 aa)). Phosphothreonine; by PKA is present on threonine 93. Phosphoserine is present on serine 95. Residues 113–223 (SFMQAGCELK…WVSGLRYLVS (111 aa)) enclose the PH domain. The region spanning 398-542 (QDMTQPLSHY…LKRMIIVKGK (145 aa)) is the PI-PLC X-box domain. The interaction with GABA A beta subunit stretch occupies residues 543–567 (KLPSDPDVLEGEVTDEDEEAEMSRR). At threonine 556 the chain carries Phosphothreonine. Position 569 is a phosphoserine (serine 569). Positions 585–701 (LSDLVSICKS…GYVLRPSIMR (117 aa)) constitute a PI-PLC Y-box domain. The 130-residue stretch at 701-830 (RDEVSYFSAN…PGYRHVPLRS (130 aa)) folds into the C2 domain. 2 coiled-coil regions span residues 894 to 914 (LREAIDMRENMQNAIVSIKEL) and 1034 to 1059 (LKGQGDLLKNAKNEAIENMKQIQLAC). The interval 1066-1095 (KAPSSSAEAKSKRSLEAIEEKESSEENGKL) is disordered. Residues 1074 to 1095 (AKSKRSLEAIEEKESSEENGKL) are compositionally biased toward basic and acidic residues. Phosphoserine is present on serine 1079.

As to quaternary structure, interacts with PPP2CA. Interacts with Ins(1,4,5)P3, Ins(1,4,5,6)P4, GABARAP, GABA receptor beta subunits, GABA receptor gamma-2 subunits and PPP1C. May form a ternary complex with GABA receptor beta subunit and GABARAP. The formation of a ternary complex with GABA receptor beta subunit and GABARAP could be the key step for facilitating the association of GABARAP with the GABA receptor gamma-2 subunit and to allow it to be transported at the right destination. Phosphorylated by the catalytic subunit of PKA. Phosphorylation of Thr-93 resulted in dissociation of PPP1C from PRIP1. As to expression, expressed in a variety of fetal and adult organs including brain, lung and kidney. Its expression was greatly reduced in small and non-small cell lung carcinoma. Isoform 1 is predominantly expressed in brain.

The protein localises to the cytoplasm. Its function is as follows. Involved in an inositol phospholipid-based intracellular signaling cascade. Shows no PLC activity to phosphatidylinositol 4,5-bisphosphate and phosphatidylinositol. Component in the phospho-dependent endocytosis process of GABA A receptor. Regulates the turnover of receptors and thus contributes to the maintenance of GABA-mediated synaptic inhibition. Its aberrant expression could contribute to the genesis and progression of lung carcinoma. Acts as an inhibitor of PPP1C. This is Inactive phospholipase C-like protein 1 (PLCL1) from Homo sapiens (Human).